A 209-amino-acid polypeptide reads, in one-letter code: B3 domain-containing protein At2g31420 (209 aa).

The segment at residues 101–198 is a DNA-binding region (TF-B3); sequence LSKLEKSDFL…KLCFALSSPT (98 aa).

Its subcellular location is the nucleus. This chain is B3 domain-containing protein At2g31420, found in Arabidopsis thaliana (Mouse-ear cress).